A 252-amino-acid chain; its full sequence is 2-succinyl-6-hydroxy-2,4-cyclohexadiene-1-carboxylate synthase (252 aa).

Belongs to the AB hydrolase superfamily. MenH family. As to quaternary structure, monomer.

It catalyses the reaction 5-enolpyruvoyl-6-hydroxy-2-succinyl-cyclohex-3-ene-1-carboxylate = (1R,6R)-6-hydroxy-2-succinyl-cyclohexa-2,4-diene-1-carboxylate + pyruvate. It participates in quinol/quinone metabolism; 1,4-dihydroxy-2-naphthoate biosynthesis; 1,4-dihydroxy-2-naphthoate from chorismate: step 3/7. It functions in the pathway quinol/quinone metabolism; menaquinone biosynthesis. In terms of biological role, catalyzes a proton abstraction reaction that results in 2,5-elimination of pyruvate from 2-succinyl-5-enolpyruvyl-6-hydroxy-3-cyclohexene-1-carboxylate (SEPHCHC) and the formation of 2-succinyl-6-hydroxy-2,4-cyclohexadiene-1-carboxylate (SHCHC). This Escherichia fergusonii (strain ATCC 35469 / DSM 13698 / CCUG 18766 / IAM 14443 / JCM 21226 / LMG 7866 / NBRC 102419 / NCTC 12128 / CDC 0568-73) protein is 2-succinyl-6-hydroxy-2,4-cyclohexadiene-1-carboxylate synthase.